A 381-amino-acid chain; its full sequence is Beta-lactamase (381 aa).

The N-terminal stretch at 1–20 (MMKKSICCALLLTASFSTFA) is a signal peptide. Serine 84 functions as the Acyl-ester intermediate in the catalytic mechanism. Tyrosine 170 functions as the Proton acceptor in the catalytic mechanism. 335–337 (KTG) contacts substrate.

Belongs to the class-C beta-lactamase family.

It is found in the periplasm. The catalysed reaction is a beta-lactam + H2O = a substituted beta-amino acid. Its activity is regulated as follows. Sulbactam is an effective progressive inhibitor but a poor competitive inhibitor. Functionally, this protein is a serine beta-lactamase with a substrate specificity for cephalosporins. This is Beta-lactamase (ampC) from Citrobacter freundii.